A 128-amino-acid chain; its full sequence is Entry-fusion complex protein OPG094 (128 aa).

The Intravirion portion of the chain corresponds to methionine 1–leucine 30. A helical; Signal-anchor for type III membrane protein transmembrane segment spans residues isoleucine 31–leucine 51. Over asparagine 52–cysteine 107 the chain is Virion surface. Residues cysteine 75 and cysteine 107 are joined by a disulfide bond.

Belongs to the orthopoxvirus OPG099 family. In terms of assembly, interacts with OPG086. Component of the entry fusion complex (EFC) composed of OPG053, OPG076, OPG086, OPG094, OPG095, OPG099, OPG107, OPG143, OPG104J5, OPG147 and OPG155. Except for OPG095 and OPG053, each of the EFC proteins is required for assembly or stability of the complex. In terms of processing, most cysteines are linked by disulfide bonds. They are created by the viral disulfide bond formation pathway, a poxvirus-specific redox pathway that operates on the cytoplasmic side of the MV membranes. Post-translationally, unglycosylated because produced in viral factories instead of the classic ER -Golgi route.

Its subcellular location is the virion membrane. Functionally, component of the entry fusion complex (EFC), which consists of 11 proteins. During cell infection, this complex mediates entry of the virion core into the host cytoplasm by a two-step mechanism consisting of lipid mixing of the viral and cellular membranes and subsequent pore formation. The sequence is that of Entry-fusion complex protein OPG094 (OPG099) from Homo sapiens (Human).